The primary structure comprises 284 residues: Phosphatidylglycerol--prolipoprotein diacylglyceryl transferase (284 aa).

Helical transmembrane passes span 19 to 39 (ISFYWYGMMYVLSFIFAMWFL), 60 to 80 (LLYLNFLGVVIGGRIGYVLFY), 98 to 118 (GGMSFHGGLIGVIISIMWFSY), 130 to 150 (FIVPAVPVGLGLGRLGNFING), 199 to 219 (QLYEMILEGIVLFVVIYIFSC), 225 to 245 (GSISGLFLLLYGLFRIIIEFF), and 258 to 278 (FITLGQVLSFPMVIFGFIIMY). R143 lines the a 1,2-diacyl-sn-glycero-3-phospho-(1'-sn-glycerol) pocket.

The protein belongs to the Lgt family.

It is found in the cell inner membrane. It carries out the reaction L-cysteinyl-[prolipoprotein] + a 1,2-diacyl-sn-glycero-3-phospho-(1'-sn-glycerol) = an S-1,2-diacyl-sn-glyceryl-L-cysteinyl-[prolipoprotein] + sn-glycerol 1-phosphate + H(+). It participates in protein modification; lipoprotein biosynthesis (diacylglyceryl transfer). Catalyzes the transfer of the diacylglyceryl group from phosphatidylglycerol to the sulfhydryl group of the N-terminal cysteine of a prolipoprotein, the first step in the formation of mature lipoproteins. The polypeptide is Phosphatidylglycerol--prolipoprotein diacylglyceryl transferase (Blochmanniella floridana).